The chain runs to 315 residues: Methionyl-tRNA formyltransferase (315 aa).

113-116 (SILP) is a (6S)-5,6,7,8-tetrahydrofolate binding site.

It belongs to the Fmt family.

It carries out the reaction L-methionyl-tRNA(fMet) + (6R)-10-formyltetrahydrofolate = N-formyl-L-methionyl-tRNA(fMet) + (6S)-5,6,7,8-tetrahydrofolate + H(+). Functionally, attaches a formyl group to the free amino group of methionyl-tRNA(fMet). The formyl group appears to play a dual role in the initiator identity of N-formylmethionyl-tRNA by promoting its recognition by IF2 and preventing the misappropriation of this tRNA by the elongation apparatus. This is Methionyl-tRNA formyltransferase from Vibrio vulnificus (strain YJ016).